The chain runs to 249 residues: Major phosphate-irrepressible acid phosphatase (249 aa).

The signal sequence occupies residues 1 to 20 (MKKNIIAGCLFSLFSLSALA).

The protein belongs to the class A bacterial acid phosphatase family. As to quaternary structure, homotetramer.

The protein resides in the periplasm. It catalyses the reaction a phosphate monoester + H2O = an alcohol + phosphate. This is Major phosphate-irrepressible acid phosphatase (phoC) from Morganella morganii (Proteus morganii).